The chain runs to 156 residues: Small ribosomal subunit protein uS7 (156 aa).

This sequence belongs to the universal ribosomal protein uS7 family. In terms of assembly, part of the 30S ribosomal subunit. Contacts proteins S9 and S11.

Functionally, one of the primary rRNA binding proteins, it binds directly to 16S rRNA where it nucleates assembly of the head domain of the 30S subunit. Is located at the subunit interface close to the decoding center, probably blocks exit of the E-site tRNA. This is Small ribosomal subunit protein uS7 from Dinoroseobacter shibae (strain DSM 16493 / NCIMB 14021 / DFL 12).